Here is a 408-residue protein sequence, read N- to C-terminus: Peptidase T (408 aa).

Histidine 78 provides a ligand contact to Zn(2+). Residue aspartate 80 is part of the active site. Aspartate 140 contributes to the Zn(2+) binding site. Catalysis depends on glutamate 174, which acts as the Proton acceptor. Residues glutamate 175, aspartate 197, and histidine 379 each coordinate Zn(2+).

Belongs to the peptidase M20B family. Zn(2+) is required as a cofactor.

The protein resides in the cytoplasm. The enzyme catalyses Release of the N-terminal residue from a tripeptide.. Cleaves the N-terminal amino acid of tripeptides. In Staphylococcus aureus (strain MRSA252), this protein is Peptidase T.